A 339-amino-acid chain; its full sequence is Vomeronasal type-1 receptor A14 (339 aa).

Over 1-42 (MMGVQICQGMMSEIPFFSPPPQFSYMMNKNIRLHTDSNIRNT) the chain is Extracellular. The chain crosses the membrane as a helical span at residues 43–63 (FFTDIGIGISANSLLLLFNIF). Residues 64–75 (KLTRGQRSRLTD) lie on the Cytoplasmic side of the membrane. A helical membrane pass occupies residues 76 to 96 (LPIGLLSLINLLMLLMAAFIA). Topologically, residues 97 to 119 (TDTFISWKGWDDIICKFLVYLYR) are extracellular. C111 and C198 are disulfide-bonded. Residues 120 to 140 (TFRGLSLCTSCLLSVLQAIIL) form a helical membrane-spanning segment. Over 141–160 (SPRSSCLAKFKHKPPHHISC) the chain is Cytoplasmic. Residues 161–181 (AILSLSVLYMFIGSHLLVSII) form a helical membrane-spanning segment. The Extracellular portion of the chain corresponds to 182–213 (ATPNLTTNDFIHVTQSCSILPMSYLMQCMFST). An N-linked (GlcNAc...) asparagine glycan is attached at N185. Residues 214-234 (LLAIRDVFLISLMVLSTWYMV) form a helical membrane-spanning segment. Residues 235-264 (ALLCRHRKQTRHLQGTSLSPKASPEQRATR) lie on the Cytoplasmic side of the membrane. Residues 265-285 (SILMLMSLFVLMSVFDSIVCS) form a helical membrane-spanning segment. Residues 286-296 (SRTMYLNDPIS) are Extracellular-facing. Residues 297-317 (YSIQLFMVHIYATVSPFVFIV) form a helical membrane-spanning segment. Topologically, residues 318 to 339 (TEKHIVNFLRSVCEGDECLNIH) are cytoplasmic.

Belongs to the G-protein coupled receptor 1 family.

It is found in the cell membrane. Functionally, putative pheromone receptor implicated in the regulation of social as well as reproductive behavior. The chain is Vomeronasal type-1 receptor A14 from Rattus norvegicus (Rat).